The primary structure comprises 317 residues: Protoheme IX farnesyltransferase (317 aa).

The next 7 helical transmembrane spans lie at 33 to 53, 54 to 74, 117 to 137, 154 to 174, 181 to 201, 242 to 262, and 285 to 305; these read VMSLVVFTAFAGLVLAPGEIN, PILGLIAILCIAVGAGASGAL, VILGLAVNWFSAGLLAFTIFF, IVIGGAAGAFPPMLGWACVTG, VILFLIIFLWTPAHFWALALF, FFTGLASAGYGIFAAVLSAIF, and MFAYSVLYLFAIFSGLLADHF.

Belongs to the UbiA prenyltransferase family. Protoheme IX farnesyltransferase subfamily.

It is found in the cell inner membrane. It catalyses the reaction heme b + (2E,6E)-farnesyl diphosphate + H2O = Fe(II)-heme o + diphosphate. The protein operates within porphyrin-containing compound metabolism; heme O biosynthesis; heme O from protoheme: step 1/1. In terms of biological role, converts heme B (protoheme IX) to heme O by substitution of the vinyl group on carbon 2 of heme B porphyrin ring with a hydroxyethyl farnesyl side group. In Agrobacterium fabrum (strain C58 / ATCC 33970) (Agrobacterium tumefaciens (strain C58)), this protein is Protoheme IX farnesyltransferase.